Here is a 107-residue protein sequence, read N- to C-terminus: Sperm-specific class P protein 31 (107 aa).

An MSP domain is found at 1-107 (MINIDPPSGD…GEVVVKMVAS (107 aa)).

In terms of tissue distribution, expressed at higher level in testis.

This Caenorhabditis elegans protein is Sperm-specific class P protein 31 (ssp-31).